The sequence spans 158 residues: Regulator of sigma D (158 aa).

It belongs to the Rsd/AlgQ family. In terms of assembly, interacts with RpoD.

The protein resides in the cytoplasm. Its function is as follows. Binds RpoD and negatively regulates RpoD-mediated transcription activation by preventing the interaction between the primary sigma factor RpoD with the catalytic core of the RNA polymerase and with promoter DNA. May be involved in replacement of the RNA polymerase sigma subunit from RpoD to RpoS during the transition from exponential growth to the stationary phase. The polypeptide is Regulator of sigma D (Escherichia coli (strain SMS-3-5 / SECEC)).